The chain runs to 335 residues: Ubiquinone biosynthesis protein COQ4, mitochondrial (335 aa).

The N-terminal 10 residues, 1–10, are a transit peptide targeting the mitochondrion; that stretch reads MLRLSLLRST. The Zn(2+) site is built by His-210, Asp-211, His-214, and Glu-226.

This sequence belongs to the COQ4 family. As to quaternary structure, component of a multi-subunit COQ enzyme complex, composed of at least COQ3, COQ4, COQ5, COQ6, COQ7 and COQ9. Interacts with COQ3. Zn(2+) is required as a cofactor.

It is found in the mitochondrion inner membrane. The catalysed reaction is 4-hydroxy-3-methoxy-5-(all-trans-hexaprenyl)benzoate + H(+) = 2-methoxy-6-(all-trans-hexaprenyl)phenol + CO2. The protein operates within cofactor biosynthesis; ubiquinone biosynthesis. Its function is as follows. Lyase that catalyzes the C1-decarboxylation of 4-hydroxy-3-methoxy-5-(all-trans-hexaprenyl)benzoic acid into 2-methoxy-6-(all-trans-hexaprenyl)phenol during ubiquinone biosynthesis. The polypeptide is Ubiquinone biosynthesis protein COQ4, mitochondrial (Saccharomyces cerevisiae (strain AWRI1631) (Baker's yeast)).